The sequence spans 293 residues: tRNA pseudouridine synthase B (293 aa).

Aspartate 39 acts as the Nucleophile in catalysis.

The protein belongs to the pseudouridine synthase TruB family. Type 1 subfamily.

The catalysed reaction is uridine(55) in tRNA = pseudouridine(55) in tRNA. Its function is as follows. Responsible for synthesis of pseudouridine from uracil-55 in the psi GC loop of transfer RNAs. The chain is tRNA pseudouridine synthase B from Streptococcus thermophilus (strain ATCC BAA-250 / LMG 18311).